Reading from the N-terminus, the 110-residue chain is Large ribosomal subunit protein uL22 (110 aa).

The protein belongs to the universal ribosomal protein uL22 family. Part of the 50S ribosomal subunit.

This protein binds specifically to 23S rRNA; its binding is stimulated by other ribosomal proteins, e.g. L4, L17, and L20. It is important during the early stages of 50S assembly. It makes multiple contacts with different domains of the 23S rRNA in the assembled 50S subunit and ribosome. Its function is as follows. The globular domain of the protein is located near the polypeptide exit tunnel on the outside of the subunit, while an extended beta-hairpin is found that lines the wall of the exit tunnel in the center of the 70S ribosome. The polypeptide is Large ribosomal subunit protein uL22 (Alkaliphilus oremlandii (strain OhILAs) (Clostridium oremlandii (strain OhILAs))).